Consider the following 194-residue polypeptide: ATP-dependent Clp protease proteolytic subunit (194 aa).

Ser-98 acts as the Nucleophile in catalysis. His-123 is a catalytic residue.

The protein belongs to the peptidase S14 family. In terms of assembly, fourteen ClpP subunits assemble into 2 heptameric rings which stack back to back to give a disk-like structure with a central cavity, resembling the structure of eukaryotic proteasomes.

It is found in the cytoplasm. The catalysed reaction is Hydrolysis of proteins to small peptides in the presence of ATP and magnesium. alpha-casein is the usual test substrate. In the absence of ATP, only oligopeptides shorter than five residues are hydrolyzed (such as succinyl-Leu-Tyr-|-NHMec, and Leu-Tyr-Leu-|-Tyr-Trp, in which cleavage of the -Tyr-|-Leu- and -Tyr-|-Trp bonds also occurs).. In terms of biological role, cleaves peptides in various proteins in a process that requires ATP hydrolysis. Has a chymotrypsin-like activity. Plays a major role in the degradation of misfolded proteins. This Syntrophus aciditrophicus (strain SB) protein is ATP-dependent Clp protease proteolytic subunit.